The chain runs to 135 residues: NAD(P)H-quinone oxidoreductase subunit 3 (135 aa).

3 consecutive transmembrane segments (helical) span residues 15 to 35 (IVFF…SSLV), 79 to 99 (MFAL…PWAV), and 104 to 124 (LGLL…VALV).

It belongs to the complex I subunit 3 family. NDH-1 can be composed of about 15 different subunits; different subcomplexes with different compositions have been identified which probably have different functions.

The protein resides in the cellular thylakoid membrane. The enzyme catalyses a plastoquinone + NADH + (n+1) H(+)(in) = a plastoquinol + NAD(+) + n H(+)(out). It carries out the reaction a plastoquinone + NADPH + (n+1) H(+)(in) = a plastoquinol + NADP(+) + n H(+)(out). In terms of biological role, NDH-1 shuttles electrons from an unknown electron donor, via FMN and iron-sulfur (Fe-S) centers, to quinones in the respiratory and/or the photosynthetic chain. The immediate electron acceptor for the enzyme in this species is believed to be plastoquinone. Couples the redox reaction to proton translocation, and thus conserves the redox energy in a proton gradient. Cyanobacterial NDH-1 also plays a role in inorganic carbon-concentration. The sequence is that of NAD(P)H-quinone oxidoreductase subunit 3 from Trichodesmium erythraeum (strain IMS101).